The following is a 449-amino-acid chain: Phosphoglucosamine mutase (449 aa).

Serine 101 (phosphoserine intermediate) is an active-site residue. Mg(2+)-binding residues include serine 101, aspartate 242, aspartate 244, and aspartate 246. At serine 101 the chain carries Phosphoserine.

This sequence belongs to the phosphohexose mutase family. Mg(2+) serves as cofactor. Activated by phosphorylation.

The enzyme catalyses alpha-D-glucosamine 1-phosphate = D-glucosamine 6-phosphate. Functionally, catalyzes the conversion of glucosamine-6-phosphate to glucosamine-1-phosphate. This chain is Phosphoglucosamine mutase, found in Bradyrhizobium sp. (strain ORS 278).